A 258-amino-acid chain; its full sequence is Glucose 1-dehydrogenase 2 (258 aa).

Residue 11-35 (IVTGSSKGIGKAIAERFGKEKMNVV) coordinates NADP(+). Ser146 contributes to the substrate binding site. Tyr159 functions as the Proton acceptor in the catalytic mechanism.

This sequence belongs to the short-chain dehydrogenases/reductases (SDR) family. Homotetramer.

It carries out the reaction D-glucose + NAD(+) = D-glucono-1,5-lactone + NADH + H(+). It catalyses the reaction D-glucose + NADP(+) = D-glucono-1,5-lactone + NADPH + H(+). The protein is Glucose 1-dehydrogenase 2 (ycdF) of Bacillus subtilis (strain 168).